The chain runs to 456 residues: Phospholipase A1 member A (456 aa).

The N-terminal stretch at 1 to 25 (MPPDFWERCFWLWGLLLWLSVGSTG) is a signal peptide. N-linked (GlcNAc...) asparagine glycosylation is present at Asn-34. Residue Ser-166 is the Nucleophile of the active site. Asp-190 functions as the Charge relay system in the catalytic mechanism. Cys-245 and Cys-258 are joined by a disulfide. The active-site Charge relay system is the His-260. 2 disulfide bridges follow: Cys-282–Cys-293 and Cys-296–Cys-304.

The protein belongs to the AB hydrolase superfamily. Lipase family.

Its subcellular location is the secreted. The catalysed reaction is a 1,2-diacyl-sn-glycero-3-phospho-L-serine + H2O = a 2-acyl-sn-glycero-3-phospho-L-serine + a fatty acid + H(+). The enzyme catalyses 1,2-di-(9Z)-octadecenoyl-sn-glycero-3-phospho-L-serine + H2O = 2-(9Z-octadecenoyl)-sn-glycero-3-phospho-L-serine + (9Z)-octadecenoate + H(+). It carries out the reaction 1-hexadecanoyl-2-(5Z,8Z,11Z,14Z-eicosatetraenoyl)-sn-glycero-3-phospho-L-serine + H2O = 2-(5Z,8Z,11Z,14Z)-eicosatetraenoyl-sn-glycero-3-phospho-L-serine + hexadecanoate + H(+). It catalyses the reaction a 1-acyl-sn-glycero-3-phospho-L-serine + H2O = sn-glycero-3-phospho-L-serine + a fatty acid + H(+). The catalysed reaction is 1-(9Z-octadecenoyl)-sn-glycero-3-phospho-L-serine + H2O = sn-glycero-3-phospho-L-serine + (9Z)-octadecenoate + H(+). Hydrolyzes the ester bond of the acyl group attached at the sn-1 position of phosphatidylserines (phospholipase A1 activity) and 1-acyl-2-lysophosphatidylserines (lysophospholipase activity) in the pathway of phosphatidylserines acyl chain remodeling. Cleaves phosphatidylserines exposed on the outer leaflet of the plasma membrane of apoptotic cells producing 2-acyl-1-lysophosphatidylserines, which in turn enhance mast cell activation and histamine production. Has no activity toward other glycerophospholipids including phosphatidylcholines, phosphatidylethanolamines, phosphatidic acids or phosphatidylinositols, or glycerolipids such as triolein. The protein is Phospholipase A1 member A (PLA1A) of Bos taurus (Bovine).